The chain runs to 361 residues: Mannose-1-phosphate guanyltransferase (361 aa).

T153 is subject to Phosphothreonine. Residue K244 forms a Glycyl lysine isopeptide (Lys-Gly) (interchain with G-Cter in ubiquitin) linkage.

It belongs to the transferase hexapeptide repeat family.

It localises to the cytoplasm. The catalysed reaction is alpha-D-mannose 1-phosphate + GTP + H(+) = GDP-alpha-D-mannose + diphosphate. It functions in the pathway nucleotide-sugar biosynthesis; GDP-alpha-D-mannose biosynthesis; GDP-alpha-D-mannose from alpha-D-mannose 1-phosphate (GTP route): step 1/1. Its function is as follows. Involved in cell wall synthesis where it is required for glycosylation. Involved in cell cycle progression through cell-size checkpoint. The sequence is that of Mannose-1-phosphate guanyltransferase (PSA1) from Saccharomyces cerevisiae (strain ATCC 204508 / S288c) (Baker's yeast).